The sequence spans 134 residues: UPF0412 protein YaaI (134 aa).

The first 23 residues, 1–23 (MKSVFTISASLAISLMLCCTAQA), serve as a signal peptide directing secretion.

It belongs to the UPF0412 family.

The chain is UPF0412 protein YaaI from Escherichia coli (strain K12).